The following is a 243-amino-acid chain: MYEVQLDKFQGPLELLYQLVKKNKIEISEISLARITEQYLEYIEHYRDFNLEMASEFMVIASELIELKVKSLLPDSEEDSTEEEKGKTIVQRLKDYHVFKKVTELFREYEKAAGQIYSKPVNLDKYVDNEVNYEIDIDISELVEAFKKAMSSTDGVEVFEGDRNLKKIESEEIKIQDKMDQILELFNQNPDQGLTFSQLVSGNPSKMEIVVTFLSILELTKLRKIEIKQEKLFSDINLRSKAG.

It belongs to the ScpA family. As to quaternary structure, component of a cohesin-like complex composed of ScpA, ScpB and the Smc homodimer, in which ScpA and ScpB bind to the head domain of Smc. The presence of the three proteins is required for the association of the complex with DNA.

Its subcellular location is the cytoplasm. Functionally, participates in chromosomal partition during cell division. May act via the formation of a condensin-like complex containing Smc and ScpB that pull DNA away from mid-cell into both cell halves. The sequence is that of Segregation and condensation protein A from Halothermothrix orenii (strain H 168 / OCM 544 / DSM 9562).